Here is a 185-residue protein sequence, read N- to C-terminus: Ribosome-recycling factor (185 aa).

It belongs to the RRF family.

Its subcellular location is the cytoplasm. Its function is as follows. Responsible for the release of ribosomes from messenger RNA at the termination of protein biosynthesis. May increase the efficiency of translation by recycling ribosomes from one round of translation to another. This Enterobacter sp. (strain 638) protein is Ribosome-recycling factor.